The following is a 157-amino-acid chain: Ribosomal RNA large subunit methyltransferase H (157 aa).

S-adenosyl-L-methionine-binding positions include G106 and L125–F130.

The protein belongs to the RNA methyltransferase RlmH family. Homodimer.

The protein localises to the cytoplasm. The enzyme catalyses pseudouridine(1915) in 23S rRNA + S-adenosyl-L-methionine = N(3)-methylpseudouridine(1915) in 23S rRNA + S-adenosyl-L-homocysteine + H(+). Its function is as follows. Specifically methylates the pseudouridine at position 1915 (m3Psi1915) in 23S rRNA. In Syntrophobacter fumaroxidans (strain DSM 10017 / MPOB), this protein is Ribosomal RNA large subunit methyltransferase H.